A 256-amino-acid chain; its full sequence is ATP synthase subunit a (256 aa).

A propeptide spans Met-1–Thr-7 (removed in mature form). A run of 6 helical transmembrane segments spans residues Phe-33–Leu-53, Tyr-92–Ile-112, Leu-122–Thr-142, Phe-148–Ile-168, Val-188–Met-208, and Ser-209–Leu-229.

Belongs to the ATPase A chain family. F-type ATPases have 2 components, CF(1) - the catalytic core - and CF(0) - the membrane proton channel. CF(1) has five subunits: alpha(3), beta(3), gamma(1), delta(1), epsilon(1). CF(0) has three main subunits: a, b and c.

It localises to the mitochondrion inner membrane. Mitochondrial membrane ATP synthase (F(1)F(0) ATP synthase or Complex V) produces ATP from ADP in the presence of a proton gradient across the membrane which is generated by electron transport complexes of the respiratory chain. F-type ATPases consist of two structural domains, F(1) - containing the extramembraneous catalytic core and F(0) - containing the membrane proton channel, linked together by a central stalk and a peripheral stalk. During catalysis, ATP synthesis in the catalytic domain of F(1) is coupled via a rotary mechanism of the central stalk subunits to proton translocation. Key component of the proton channel; it may play a direct role in the translocation of protons across the membrane. This is ATP synthase subunit a (ATP6) from Kluyveromyces lactis (strain ATCC 8585 / CBS 2359 / DSM 70799 / NBRC 1267 / NRRL Y-1140 / WM37) (Yeast).